Here is a 176-residue protein sequence, read N- to C-terminus: Odorant-binding protein 2a (176 aa).

Positions 1-19 (MKSLLLTILLLGLVAVLKA) are cleaved as a signal peptide. N-linked (GlcNAc...) asparagine glycans are attached at residues Asn-42 and Asn-124. Cys-79 and Cys-172 are joined by a disulfide.

It belongs to the calycin superfamily. Lipocalin family. Expressed in the liver (at protein level). Expressed in epididymis.

It localises to the secreted. Functionally, involved in the regulation of systematic glucose homeostasis and insulin sensitivity. Involved in the regulation of liver lipid levels by positive regulation of hepatic lipogenesis and negative regulation of fatty acid beta-oxidation; via downstream transcriptional regulation of CPT1A and hepatic lipogenic program gene expression. May regulate hepatic lipogenesis and fatty acid beta-oxidation in an autocrine or paracrine manner. The sequence is that of Odorant-binding protein 2a (Obp2a) from Mus musculus (Mouse).